Consider the following 512-residue polypeptide: Maturase K (512 aa).

The protein belongs to the intron maturase 2 family. MatK subfamily.

The protein resides in the plastid. It localises to the chloroplast. In terms of biological role, usually encoded in the trnK tRNA gene intron. Probably assists in splicing its own and other chloroplast group II introns. This Oenothera parviflora (Small-flowered evening primrose) protein is Maturase K.